The primary structure comprises 548 residues: Probable malate:quinone oxidoreductase (548 aa).

Positions 521–548 (DKPQAADSTPKPQLKPQPVQKEVADIAL) are disordered. Positions 530–541 (PKPQLKPQPVQK) are enriched in low complexity.

It belongs to the MQO family. FAD serves as cofactor.

The catalysed reaction is (S)-malate + a quinone = a quinol + oxaloacetate. It participates in carbohydrate metabolism; tricarboxylic acid cycle; oxaloacetate from (S)-malate (quinone route): step 1/1. The sequence is that of Probable malate:quinone oxidoreductase from Escherichia coli (strain UTI89 / UPEC).